The chain runs to 595 residues: Adenine deaminase 3 (595 aa).

Belongs to the metallo-dependent hydrolases superfamily. Adenine deaminase family. Requires Mn(2+) as cofactor.

It carries out the reaction adenine + H2O + H(+) = hypoxanthine + NH4(+). In Rhizobium meliloti (strain 1021) (Ensifer meliloti), this protein is Adenine deaminase 3.